The chain runs to 354 residues: Decorin (354 aa).

An N-terminal signal peptide occupies residues 1–16; that stretch reads MKATLVLFLLAQVSWA. The propeptide occupies 17–30; sequence GPFEQRGLFDFMLE. Ser34 carries O-linked (Xyl...) (glycosaminoglycan) serine glycosylation. Cystine bridges form between Cys49-Cys55 and Cys53-Cys62. 12 LRR repeats span residues 68-88, 89-112, 113-136, 137-157, 158-181, 182-207, 208-228, 229-252, 253-276, 277-299, 300-329, and 330-354; these read DKVPWEFPPDTTLLDLQNNKI, TEIKEGAFKNLKDLHTLILVNNKI, SKISPEAFKPLVKLERLYLSKNHL, KELPEKLPKTLQELRLHDNEI, TKLKKSVFNGLNRMIVIELGGNPL, KNSGIENGALQGMKGLGYIRISDTNI, TAIPQGLPTSISELHLDGNKI, AKVDAASLKGMSNLSKLGLSFNSI, TVVENGSLANVPHLRELHLDNNKL, LRVPAGLAQHKYVQVVYLHNNNI, SEVGQHDFCLPSYQTRKTSYTAVSLYSNPV, and RYWQIHPHTFRCVFGRSTIQLGNYK. A glycan (N-linked (GlcNAc...) asparagine) is linked at Asn206. 3 N-linked (GlcNAc...) asparagine glycosylation sites follow: Asn241, Asn257, and Asn298. A disulfide bridge connects residues Cys308 and Cys341.

It belongs to the small leucine-rich proteoglycan (SLRP) family. SLRP class I subfamily. Binds to type I and type II collagen, fibronectin and TGF-beta. Forms a ternary complex with MFAP2 and ELN. Interacts with DPT. In terms of processing, the attached glycosaminoglycan chain can be either chondroitin sulfate or dermatan sulfate depending upon the tissue of origin.

The protein resides in the secreted. It is found in the extracellular space. It localises to the extracellular matrix. In terms of biological role, may affect the rate of fibrils formation. May be implicated in the dilatation of the rat cervix. The protein is Decorin (Dcn) of Rattus norvegicus (Rat).